The following is a 491-amino-acid chain: Probable Xaa-Pro aminopeptidase An01g13040 (491 aa).

4 residues coordinate Mn(2+): D276, D287, E420, and E459.

The protein belongs to the peptidase M24B family. It depends on Mn(2+) as a cofactor.

The catalysed reaction is Release of any N-terminal amino acid, including proline, that is linked to proline, even from a dipeptide or tripeptide.. In terms of biological role, catalyzes the removal of a penultimate prolyl residue from the N-termini of peptides. This Aspergillus niger (strain ATCC MYA-4892 / CBS 513.88 / FGSC A1513) protein is Probable Xaa-Pro aminopeptidase An01g13040.